The primary structure comprises 474 residues: tRNA-2-methylthio-N(6)-dimethylallyladenosine synthase (474 aa).

Residues 3–120 form the MTTase N-terminal domain; sequence KKLLIKTWGC…LPEMIKQSQS (118 aa). 6 residues coordinate [4Fe-4S] cluster: Cys-12, Cys-49, Cys-83, Cys-157, Cys-161, and Cys-164. Residues 143 to 375 form the Radical SAM core domain; sequence RAEGATAFVS…QQQINAQAMR (233 aa). One can recognise a TRAM domain in the interval 378 to 441; it reads RLMLGTEQRV…ANSLRGEIVR (64 aa).

The protein belongs to the methylthiotransferase family. MiaB subfamily. Monomer. [4Fe-4S] cluster serves as cofactor.

It is found in the cytoplasm. It carries out the reaction N(6)-dimethylallyladenosine(37) in tRNA + (sulfur carrier)-SH + AH2 + 2 S-adenosyl-L-methionine = 2-methylsulfanyl-N(6)-dimethylallyladenosine(37) in tRNA + (sulfur carrier)-H + 5'-deoxyadenosine + L-methionine + A + S-adenosyl-L-homocysteine + 2 H(+). In terms of biological role, catalyzes the methylthiolation of N6-(dimethylallyl)adenosine (i(6)A), leading to the formation of 2-methylthio-N6-(dimethylallyl)adenosine (ms(2)i(6)A) at position 37 in tRNAs that read codons beginning with uridine. The polypeptide is tRNA-2-methylthio-N(6)-dimethylallyladenosine synthase (Vibrio vulnificus (strain YJ016)).